A 656-amino-acid polypeptide reads, in one-letter code: Pyoverdine export ATP-binding/permease protein PvdT (656 aa).

In terms of domain architecture, ABC transporter spans 6 to 245 (IDLRGIRKSY…SANPAALQAV (240 aa)). 43-50 (GASGSGKS) provides a ligand contact to ATP. The next 4 membrane-spanning stretches (helical) occupy residues 284–304 (ALTL…LAVG), 538–558 (IAAI…LMTV), 589–609 (LSVV…AALL), and 619–639 (LSAV…FGFM).

It belongs to the ABC transporter superfamily. Macrolide exporter (TC 3.A.1.122) family. As to quaternary structure, part of the tripartite efflux system PvdRT-OpmQ, which is composed of an inner membrane component with both ATPase and permease domains, PvdT, a periplasmic membrane fusion protein, PvdR, and an outer membrane component, OpmQ.

The protein localises to the cell inner membrane. Its function is as follows. Part of the tripartite efflux system PvdRT-OpmQ required for the secretion into the extracellular milieu of the siderophore pyoverdine (PVD), which is involved in iron acquisition. This subunit binds PVD and drives its secretion by hydrolyzing ATP. The system is responsible for export of newly synthesized PVD after the final steps of biosynthesis have taken place in the periplasm. It is also responsible for recycling of PVD after internalization of ferri-PVD into the periplasm by the outer-membrane receptor FpvA and release of iron from PVD, thus making PVD available for new cycles of iron uptake. The chain is Pyoverdine export ATP-binding/permease protein PvdT from Pseudomonas syringae pv. tomato (strain ATCC BAA-871 / DC3000).